A 292-amino-acid chain; its full sequence is Probable E3 ubiquitin-protein ligase RNF144A (292 aa).

The tract at residues 16 to 236 (PLVSCKLCLG…YDKGPCRNKL (221 aa)) is TRIAD supradomain. Zn(2+) is bound by residues C20, C23, C43, C46, C111, C116, C135, C138, C143, C146, H151, C156, C185, and C188. The RING-type 1 zinc finger occupies 20-70 (CKLCLGEYTVEQMTTIAQCQCIFCTLCLKQYVELLIKEGLETAISCPDASC). An IBR-type zinc finger spans residues 91–156 (QKYKKLQFEK…KANWHPGQGC (66 aa)). The RING-type 2; atypical zinc finger occupies 185 to 214 (CPKCKVYIERDEGCAQMMCKNCKHAFCWYC). Residue C198 is part of the active site. Residues C203, C206, C211, C214, H226, and C232 each contribute to the Zn(2+) site. A helical membrane pass occupies residues 250 to 270 (VVGIFAGFGLLLLVASPFLLL).

It belongs to the RBR family. RNF144 subfamily.

It localises to the membrane. The catalysed reaction is [E2 ubiquitin-conjugating enzyme]-S-ubiquitinyl-L-cysteine + [acceptor protein]-L-lysine = [E2 ubiquitin-conjugating enzyme]-L-cysteine + [acceptor protein]-N(6)-ubiquitinyl-L-lysine.. It participates in protein modification; protein ubiquitination. In terms of biological role, E3 ubiquitin-protein ligase which accepts ubiquitin from E2 ubiquitin-conjugating enzymes ube2l3 and ube2l6 in the form of a thioester and then directly transfers the ubiquitin to targeted substrates. The polypeptide is Probable E3 ubiquitin-protein ligase RNF144A (rnf144a) (Xenopus tropicalis (Western clawed frog)).